A 119-amino-acid chain; its full sequence is Dolichyl-diphosphooligosaccharide--protein glycosyltransferase subunit DAD1 (119 aa).

At 1–35 (MGKASHSSTAQDAVALFDSLRSAYSATPTTLKIID) the chain is on the cytoplasmic side. Residues 36-56 (LYIGFAVSTALIQVVYMAIVG) form a helical membrane-spanning segment. Over 57–59 (SFP) the chain is Lumenal. A helical membrane pass occupies residues 60–80 (FNSFLSGVLSCIGTAVLAVCL). At 81–98 (RIQVNKENKEFKDLAPER) the chain is on the cytoplasmic side. A helical membrane pass occupies residues 99 to 119 (AFADFVLCNLVLHMVIMNFLG).

Belongs to the DAD/OST2 family. In terms of assembly, component of the oligosaccharyltransferase (OST) complex.

Its subcellular location is the endoplasmic reticulum membrane. The protein operates within protein modification; protein glycosylation. In terms of biological role, subunit of the oligosaccharyl transferase (OST) complex that catalyzes the initial transfer of a defined glycan (Glc(3)Man(9)GlcNAc(2) in eukaryotes) from the lipid carrier dolichol-pyrophosphate to an asparagine residue within an Asn-X-Ser/Thr consensus motif in nascent polypeptide chains, the first step in protein N-glycosylation. N-glycosylation occurs cotranslationally and the complex associates with the Sec61 complex at the channel-forming translocon complex that mediates protein translocation across the endoplasmic reticulum (ER). All subunits are required for a maximal enzyme activity. This is Dolichyl-diphosphooligosaccharide--protein glycosyltransferase subunit DAD1 (DAD1) from Malus domestica (Apple).